A 598-amino-acid polypeptide reads, in one-letter code: Thiol:disulfide interchange protein DsbD (598 aa).

A signal peptide spans 1 to 21; sequence MRALLTFFVAGLLVLSSPAMA. A disulfide bridge links cysteine 130 with cysteine 136. Residues 158–180 form a disordered region; it reads TMPTQTASPLDTSTANTSTPQPL. Polar residues predominate over residues 159-180; the sequence is MPTQTASPLDTSTANTSTPQPL. 8 helical membrane-spanning segments follow: residues 198–220, 240–262, 274–296, 324–346, 353–375, 385–407, 414–431, and 446–468; these read LLFL…YPIL, LVYV…SAGL, LIGL…TLQL, AISG…LYVA, TGGV…VAVF, GWMD…FLLE, WSTA…GWLY, and AVGI…YWFA. A disulfide bridge connects residues cysteine 212 and cysteine 333. Residues 456-598 form the Thioredoxin domain; that stretch reads FASAQPALNY…FLEHIQRISN (143 aa). Cysteines 513 and 516 form a disulfide.

It belongs to the thioredoxin family. DsbD subfamily.

Its subcellular location is the cell inner membrane. The enzyme catalyses [protein]-dithiol + NAD(+) = [protein]-disulfide + NADH + H(+). The catalysed reaction is [protein]-dithiol + NADP(+) = [protein]-disulfide + NADPH + H(+). Required to facilitate the formation of correct disulfide bonds in some periplasmic proteins and for the assembly of the periplasmic c-type cytochromes. Acts by transferring electrons from cytoplasmic thioredoxin to the periplasm. This transfer involves a cascade of disulfide bond formation and reduction steps. This is Thiol:disulfide interchange protein DsbD from Vibrio vulnificus (strain YJ016).